Reading from the N-terminus, the 23-residue chain is Aurein-4.1 (23 aa).

The protein belongs to the frog skin active peptide (FSAP) family. Aurein subfamily. Expressed by the skin dorsal glands.

Its subcellular location is the secreted. In terms of biological role, has no antimicrobial or anticancer activity. The polypeptide is Aurein-4.1 (Ranoidea aurea (Green and golden bell frog)).